Reading from the N-terminus, the 1258-residue chain is Plasma membrane calcium-transporting ATPase 3 (1258 aa).

The span at 1 to 19 (MGDMANSSIEFHPKPQQQR) shows a compositional bias: polar residues. The tract at residues 1–22 (MGDMANSSIEFHPKPQQQREVP) is disordered. The Cytoplasmic segment spans residues 1–97 (MGDMANSSIE…NFIPPKQPKT (97 aa)). Ser8 carries the post-translational modification Phosphoserine. Residues 98 to 118 (FLQLVWEALQDVTLIILEVAA) form a helical membrane-spanning segment. Over 119–155 (IVSLGLSFYAPPGEESEACGNVSGGAEDEGEAEAGWI) the chain is Extracellular. Residues 156-176 (EGAAILLSVICVVLVTAFNDW) form a helical membrane-spanning segment. Topologically, residues 177–364 (SKEKQFRGLQ…KEKSVLQGKL (188 aa)) are cytoplasmic. 2 disordered regions span residues 298–328 (EEEK…GAVA) and 335–354 (KSAE…NVPK). Basic and acidic residues-rich tracts occupy residues 299 to 308 (EEKKDKKGKQ) and 342 to 354 (MEER…NVPK). A helical transmembrane segment spans residues 365 to 384 (TKLAVQIGKAGLVMSAITVI). Topologically, residues 385-417 (ILVLYFVIETFVVDGRVWLAECTPVYVQYFVKF) are extracellular. The helical transmembrane segment at 418–435 (FIIGVTVLVVAVPEGLPL) threads the bilayer. The Cytoplasmic portion of the chain corresponds to 436–849 (AVTISLAYSV…MWGRNVYDSI (414 aa)). Residue Asp473 is the 4-aspartylphosphate intermediate of the active site. Positions 794 and 798 each coordinate Mg(2+). A helical membrane pass occupies residues 850-869 (SKFLQFQLTVNVVAVIVAFT). The Extracellular segment spans residues 870–879 (GACITQDSPL). The helical transmembrane segment at 880–900 (KAVQMLWVNLIMDTFASLALA) threads the bilayer. Residues 901–920 (TEPPTESLLLRKPYGRDKPL) lie on the Cytoplasmic side of the membrane. The chain crosses the membrane as a helical span at residues 921 to 943 (ISRTMMKNILGHAVYQLTIIFTL). Topologically, residues 944–961 (LFVGELFFDIDSGRNAPL) are extracellular. A helical transmembrane segment spans residues 962 to 983 (HSPPSEHYTIIFNTFVMMQLFN). Topologically, residues 984–1002 (EINARKIHGERNVFDGIFS) are cytoplasmic. The helical transmembrane segment at 1003–1024 (NPIFCTIVLGTFGIQIVIVQFG) threads the bilayer. Over 1025 to 1034 (GKPFSCSPLS) the chain is Extracellular. A helical transmembrane segment spans residues 1035–1056 (TEQWLWCLFVGVGELVWGQVIA). Residues 1057 to 1258 (TIPTSQLKCL…SPLHSMETSL (202 aa)) are Cytoplasmic-facing. Phosphothreonine is present on Thr1079. The calmodulin-binding subdomain A stretch occupies residues 1097–1114 (LRRGQILWFRGLNRIQTQ). At Thr1113 the chain carries Phosphothreonine; by PKC. A calmodulin-binding subdomain B region spans residues 1115-1124 (MEVVSTFKRS). The residue at position 1126 (Ser1126) is a Phosphoserine. Positions 1204 to 1258 (ENEERLRAPPPPPPNQNNNAIDSGIYLTTHATKSATSSAFSSRPGSPLHSMETSL) are disordered. A compositionally biased stretch (low complexity) spans 1231 to 1245 (TTHATKSATSSAFSS).

It belongs to the cation transport ATPase (P-type) (TC 3.A.3) family. Type IIB subfamily. In terms of assembly, interacts with PDZD11. Interacts (via N-terminus) with YWHAE. As to expression, expressed predominantly in brain and skeletal muscle. Expressed in the molecular layer of the cerebellar cortex, in particular in granule cells (at protein level). Expressed in aldosterone producing glomerulosa cells of adrenal glands (at protein level). Detected at low levels in various tissues including testis, stomach, small intestine, and large intestine. Most abundant form in brain and most other tissues. In terms of tissue distribution, most abundant form in skeletal muscle and is also found in brain and at low levels in testis and kidney.

Its subcellular location is the cell membrane. The protein localises to the presynaptic cell membrane. It catalyses the reaction Ca(2+)(in) + ATP + H2O = Ca(2+)(out) + ADP + phosphate + H(+). Functionally, ATP-driven Ca(2+) ion pump involved in the maintenance of basal intracellular Ca(2+) levels at the presynaptic terminals. Uses ATP as an energy source to transport cytosolic Ca(2+) ions across the plasma membrane to the extracellular compartment. May counter-transport protons, but the mechanism and the stoichiometry of this Ca(2+)/H(+) exchange remains to be established. The chain is Plasma membrane calcium-transporting ATPase 3 (Atp2b3) from Rattus norvegicus (Rat).